Consider the following 275-residue polypeptide: Phosphatidylglycerol--prolipoprotein diacylglyceryl transferase (275 aa).

The next 4 membrane-spanning stretches (helical) occupy residues 20–40 (FTIH…LLLA), 58–78 (LLWA…VFQW), 88–108 (IIAI…GFIV), and 118–138 (LSSW…QGIG). Residue Arg-139 participates in a 1,2-diacyl-sn-glycero-3-phospho-(1'-sn-glycerol) binding. The next 2 membrane-spanning stretches (helical) occupy residues 209–229 (GEIF…IEGM) and 239–259 (IRIS…ILII).

This sequence belongs to the Lgt family.

The protein resides in the cell membrane. The catalysed reaction is L-cysteinyl-[prolipoprotein] + a 1,2-diacyl-sn-glycero-3-phospho-(1'-sn-glycerol) = an S-1,2-diacyl-sn-glyceryl-L-cysteinyl-[prolipoprotein] + sn-glycerol 1-phosphate + H(+). It functions in the pathway protein modification; lipoprotein biosynthesis (diacylglyceryl transfer). Functionally, catalyzes the transfer of the diacylglyceryl group from phosphatidylglycerol to the sulfhydryl group of the N-terminal cysteine of a prolipoprotein, the first step in the formation of mature lipoproteins. The chain is Phosphatidylglycerol--prolipoprotein diacylglyceryl transferase from Limosilactobacillus reuteri (strain DSM 20016) (Lactobacillus reuteri).